The chain runs to 619 residues: MVNEYKRIVLLRGLECINKHYFSLFKSLLARDLNLERDNQEQYTTIQIANMMEEKFPADSGLGKLIAFCEEVPALRKRAEILKKERSEVTGETSLEKNGQEAGPATPTSTTSHMLASERGETSATQEETSTAQAGTSTAQARTSTAQAGTSTAQKRKIMREEETGVKKSKAAKEPDQPPCCEEPTARCQSPILHSSSSASSNIPSAKNQKSQPQNQNIPRGAVLHSEPLTVMVLTATDPFEYESPEHEVKNMLHATVATVSQYFHVKVFNINLKEKFTKKNFIIISNYFESKGILEINETSSVLEAAPDQMIEVPNSIIRNANASPKICDIQKGTSGAVFYGVFTLHKKTVNRKNTIYEIKDGSGSIEVVGSGKWHNINCKEGDKLHLFCFHLKTIDRQPKLVCGEHSFIKISKRGNVPKEPAKEEDHHHGPKQVMVLKVTEPFTYDLKEDKRMFHATVATETEFFRVKVFDTALKSKFIPRNIIAISDYFGCNGFLEIYRASCVSDVNVNPTMVISNTLRQRANATPKISYLFSQARGTFVSGEYLVNKKTERNKFIYYGIGDDTGKMEVVVYGRLTNVRCEPGSKLRLVCFELTSTEDGWQLRSVRHSYMQVINARK.

A Pyrin domain is found at 1 to 88; it reads MVNEYKRIVL…AEILKKERSE (88 aa). The Nuclear export signal motif lies at 24–35; that stretch reads LFKSLLARDLNL. Basic and acidic residues predominate over residues 86–99; the sequence is RSEVTGETSLEKNG. A disordered region spans residues 86–223; it reads RSEVTGETSL…QNQNIPRGAV (138 aa). Positions 122–153 are enriched in low complexity; sequence TSATQEETSTAQAGTSTAQARTSTAQAGTSTA. A run of 3 repeats spans residues 134-140, 141-147, and 148-154. Residues 134 to 154 form a 3 X 7 AA tandem repeats of A-[GR]-T-S-T-A-Q region; it reads AGTSTAQARTSTAQAGTSTAQ. Residues 150 to 157 carry the Nuclear localization signal motif; it reads TSTAQKRK. The segment covering 159-176 has biased composition (basic and acidic residues); that stretch reads MREEETGVKKSKAAKEPD. Positions 190–206 are enriched in low complexity; that stretch reads SPILHSSSSASSNIPSA. The span at 207-218 shows a compositional bias: polar residues; sequence KNQKSQPQNQNI. 2 consecutive HIN-200 domains span residues 213-413 and 417-615; these read PQNQ…IKIS and NVPK…MQVI. Residues 550 to 614 form an interaction with ID2 region; sequence KKTERNKFIY…RSVRHSYMQV (65 aa).

This sequence belongs to the HIN-200 family. Interacts with UBTF. Interacts with RUNX2. Interacts with ID1, ID2 and ID3. Interacts with STING. In terms of processing, acetylated upon bacterial infection, leading to translocation from nucleus to cytoplasm and subsequent recruitment of STING to activate IFN-beta production. In terms of tissue distribution, present in osteoblasts (at protein level).

It localises to the nucleus. It is found in the nucleolus. The protein localises to the cytoplasm. Functionally, interferon-stimulated protein that plays a role in several biological processes including cell differentiation, autophagy and innate immunity. Cooperates with CGAS to sense dsDNA and activates the STING-dependent type I IFN pathway. Mechanistically, gets acetylated upon bacterial infection and then translocates from nucleus into cytoplasm to recruit STING for activation of TBK1-dependent IRF3 nuclear translocation and IFN-beta release. Inhibits the transcription of ribosomal RNA. May inhibit DNA binding by UBTF. Inhibits cell growth via p53/TP53 and RB1-dependent and independent pathways. Acts as a coactivator of RUNX2 during osteogenesis. May be involved in macrophage differentiation. Enables skeletal muscle and cardiac myocyte differentiation by sequestring Id proteins in the cytosol and promoting their ubiquitination and subsequent degradation. This is Interferon-activable protein 204 (Ifi204) from Mus musculus (Mouse).